Here is a 160-residue protein sequence, read N- to C-terminus: Transmembrane protein 216 (160 aa).

Transmembrane regions (helical) follow at residues 41–61 (WYFAAFFVAEILMFIYKGVIL), 68–88 (LILDVVLLLLFSGLETLRLFY), 101–121 (LFVSVAILVPCAVLSVYYLLL), and 134–154 (AVLLCFYGFELVLGVMTISIF).

Part of the tectonic-like complex (also named B9 complex).

It localises to the membrane. Its subcellular location is the cytoplasm. The protein resides in the cytoskeleton. The protein localises to the cilium basal body. Its function is as follows. Part of the tectonic-like complex which is required for tissue-specific ciliogenesis and may regulate ciliary membrane composition. This is Transmembrane protein 216 (tmem216) from Danio rerio (Zebrafish).